The sequence spans 70 residues: DNA gyrase inhibitor YacG (70 aa).

4 residues coordinate Zn(2+): cysteine 9, cysteine 12, cysteine 28, and cysteine 32. Residues 43–70 (ESRKIPGSSIDPESIVTSNNKQDNEDEQ) form a disordered region.

The protein belongs to the DNA gyrase inhibitor YacG family. As to quaternary structure, interacts with GyrB. Zn(2+) serves as cofactor.

Its function is as follows. Inhibits all the catalytic activities of DNA gyrase by preventing its interaction with DNA. Acts by binding directly to the C-terminal domain of GyrB, which probably disrupts DNA binding by the gyrase. This chain is DNA gyrase inhibitor YacG, found in Legionella pneumophila (strain Paris).